A 246-amino-acid chain; its full sequence is 5-oxoprolinase subunit A (246 aa).

Belongs to the LamB/PxpA family. As to quaternary structure, forms a complex composed of PxpA, PxpB and PxpC.

It catalyses the reaction 5-oxo-L-proline + ATP + 2 H2O = L-glutamate + ADP + phosphate + H(+). In terms of biological role, catalyzes the cleavage of 5-oxoproline to form L-glutamate coupled to the hydrolysis of ATP to ADP and inorganic phosphate. This Cupriavidus pinatubonensis (strain JMP 134 / LMG 1197) (Cupriavidus necator (strain JMP 134)) protein is 5-oxoprolinase subunit A.